Reading from the N-terminus, the 213-residue chain is Peptidyl-tRNA hydrolase (213 aa).

Tyr-26 contributes to the tRNA binding site. The Proton acceptor role is filled by His-31. Residues Tyr-78, Asn-80, and Asn-126 each contribute to the tRNA site.

The protein belongs to the PTH family. Monomer.

It is found in the cytoplasm. The enzyme catalyses an N-acyl-L-alpha-aminoacyl-tRNA + H2O = an N-acyl-L-amino acid + a tRNA + H(+). Hydrolyzes ribosome-free peptidyl-tRNAs (with 1 or more amino acids incorporated), which drop off the ribosome during protein synthesis, or as a result of ribosome stalling. Its function is as follows. Catalyzes the release of premature peptidyl moieties from peptidyl-tRNA molecules trapped in stalled 50S ribosomal subunits, and thus maintains levels of free tRNAs and 50S ribosomes. The chain is Peptidyl-tRNA hydrolase from Nostoc punctiforme (strain ATCC 29133 / PCC 73102).